A 98-amino-acid polypeptide reads, in one-letter code: Large ribosomal subunit protein uL23 (98 aa).

This sequence belongs to the universal ribosomal protein uL23 family. Part of the 50S ribosomal subunit. Contacts protein L29, and trigger factor when it is bound to the ribosome.

One of the early assembly proteins it binds 23S rRNA. One of the proteins that surrounds the polypeptide exit tunnel on the outside of the ribosome. Forms the main docking site for trigger factor binding to the ribosome. The polypeptide is Large ribosomal subunit protein uL23 (Methylobacterium sp. (strain 4-46)).